The sequence spans 508 residues: RanBP-type and C3HC4-type zinc finger-containing protein 1 (508 aa).

Met-1 is subject to N-acetylmethionine. The interval 1-218 (MDEKTKKAEE…PGCEMCCRAR (218 aa)) is interaction with IRF3. The interaction with TAB2 stretch occupies residues 1 to 268 (MDEKTKKAEE…NYLQHVQLEQ (268 aa)). Position 50 is a phosphoserine (Ser-50). A Ubiquitin-like domain is found at 55–119 (IRLCVSVEDA…DQETLHSHGI (65 aa)). An interaction with RNF31 region spans residues 69–131 (VTIWLTVRPD…NGDSAYLYLL (63 aa)). The disordered stretch occupies residues 161 to 191 (TLQPRGPLEPVLPKPRTHQETGQPDAAPESP). The RanBP2-type zinc finger occupies 188–220 (PESPPVGWQCPGCTFINKPTRPGCEMCCRARPE). Residues 231 to 260 (DEEERARLAGEEEALRQYEQRKQQQQEGNY) adopt a coiled-coil conformation. Residues 276–504 (EPAECPVCYS…VNGIPCHPSC (229 aa)) are TRIAD supradomain. Positions 280, 283, 298, 300, 303, 306, and 321 each coordinate Zn(2+). An RING-type 1 zinc finger spans residues 280–330 (CPVCYSVLAPGEAVVLRECLHTFCRECLQGTIRNSQEAEVSCPFIDNTYSC). Tyr-328 is modified (phosphotyrosine). Residues Cys-330, Cys-369, Cys-374, Cys-389, Cys-392, Cys-397, Cys-400, His-404, Cys-409, Cys-445, and Cys-448 each contribute to the Zn(2+) site. The segment at 349–409 (QRFLDLGVSI…CKAIHERMNC (61 aa)) adopts an IBR-type zinc-finger fold. An RING-type 2; atypical zinc finger spans residues 445–474 (CPQCRIVVQKKDGCDWIRCTVCHTEICWVT). Residue Cys-458 is part of the active site. Residues Cys-463 and Cys-466 each coordinate Zn(2+).

This sequence belongs to the RBR family. Component of the LUBAC complex (linear ubiquitin chain assembly complex) which consists of SHARPIN, RBCK1 and RNF31. LUBAC has a MW of approximately 600 kDa suggesting a heteromultimeric assembly of its subunits. Interacts with beta-I-type (PRKCB1) and zeta-type protein kinase C (PRKCZ). Interacts with UBE2L3. Interacts with IREB2 only in iron-rich conditions. Associates with the TNF-R1 signaling complex (TNF-RSC) in a stimulation-dependent manner. Interacts with EYA1, TAB2, TAB3, MAP3K7 TRAF6 and RIPK1. Interacts with IRF3. Post-translationally, auto-ubiquitinated. Auto-ubiquitination leads to degradation by the proteasome. Phosphorylated. In vitro, phosphorylation inhibits auto-ubiquitination activity. In terms of tissue distribution, widely expressed.

The catalysed reaction is [E2 ubiquitin-conjugating enzyme]-S-ubiquitinyl-L-cysteine + [acceptor protein]-L-lysine = [E2 ubiquitin-conjugating enzyme]-L-cysteine + [acceptor protein]-N(6)-ubiquitinyl-L-lysine.. Its pathway is protein modification; protein ubiquitination. In terms of biological role, E3 ubiquitin-protein ligase, which accepts ubiquitin from specific E2 ubiquitin-conjugating enzymes, such as UBE2L3/UBCM4, and then transfers it to substrates. Functions as an E3 ligase for oxidized IREB2 and both heme and oxygen are necessary for IREB2 ubiquitination. Promotes ubiquitination of TAB2 and IRF3 and their degradation by the proteasome. Component of the LUBAC complex which conjugates linear ('Met-1'-linked) polyubiquitin chains to substrates and plays a key role in NF-kappa-B activation and regulation of inflammation. LUBAC conjugates linear polyubiquitin to IKBKG and RIPK1 and is involved in activation of the canonical NF-kappa-B and the JNK signaling pathways. Linear ubiquitination mediated by the LUBAC complex interferes with TNF-induced cell death and thereby prevents inflammation. LUBAC is recruited to the TNF-R1 signaling complex (TNF-RSC) following polyubiquitination of TNF-RSC components by BIRC2 and/or BIRC3 and to conjugate linear polyubiquitin to IKBKG and possibly other components contributing to the stability of the complex. The LUBAC complex is also involved in innate immunity by conjugating linear polyubiquitin chains at the surface of bacteria invading the cytosol to form the ubiquitin coat surrounding bacteria. LUBAC is not able to initiate formation of the bacterial ubiquitin coat, and can only promote formation of linear polyubiquitins on pre-existing ubiquitin. The bacterial ubiquitin coat acts as an 'eat-me' signal for xenophagy and promotes NF-kappa-B activation. Together with OTULIN, the LUBAC complex regulates the canonical Wnt signaling during angiogenesis. Binds polyubiquitin of different linkage types. This is RanBP-type and C3HC4-type zinc finger-containing protein 1 (Rbck1) from Rattus norvegicus (Rat).